The primary structure comprises 120 residues: Large ribosomal subunit protein uL18 (120 aa).

The protein belongs to the universal ribosomal protein uL18 family. Part of the 50S ribosomal subunit; part of the 5S rRNA/L5/L18/L25 subcomplex. Contacts the 5S and 23S rRNAs.

In terms of biological role, this is one of the proteins that bind and probably mediate the attachment of the 5S RNA into the large ribosomal subunit, where it forms part of the central protuberance. This chain is Large ribosomal subunit protein uL18, found in Methylorubrum extorquens (strain CM4 / NCIMB 13688) (Methylobacterium extorquens).